A 39-amino-acid polypeptide reads, in one-letter code: Photosystem II reaction center protein L (39 aa).

The chain crosses the membrane as a helical span at residues 18–38; the sequence is SLYLGLLIVFTTGILFSSYFF.

The protein belongs to the PsbL family. PSII is composed of 1 copy each of membrane proteins PsbA, PsbB, PsbC, PsbD, PsbE, PsbF, PsbH, PsbI, PsbJ, PsbK, PsbL, PsbM, PsbT, PsbX, PsbY, PsbZ, Psb30/Ycf12, peripheral proteins PsbO, CyanoQ (PsbQ), PsbU, PsbV and a large number of cofactors. It forms dimeric complexes.

The protein localises to the cellular thylakoid membrane. Functionally, one of the components of the core complex of photosystem II (PSII). PSII is a light-driven water:plastoquinone oxidoreductase that uses light energy to abstract electrons from H(2)O, generating O(2) and a proton gradient subsequently used for ATP formation. It consists of a core antenna complex that captures photons, and an electron transfer chain that converts photonic excitation into a charge separation. This subunit is found at the monomer-monomer interface and is required for correct PSII assembly and/or dimerization. This Synechococcus sp. (strain CC9311) protein is Photosystem II reaction center protein L.